The primary structure comprises 261 residues: Cobalt transport protein CbiM (261 aa).

An N-terminal signal peptide occupies residues methionine 1–alanine 33. 7 consecutive transmembrane segments (helical) span residues leucine 41–valine 61, leucine 76–valine 96, leucine 108–phenylalanine 128, threonine 140–tyrosine 160, isoleucine 172–glutamine 192, phenylalanine 197–isoleucine 217, and isoleucine 220–tyrosine 240.

This sequence belongs to the CbiM family. As to quaternary structure, forms an energy-coupling factor (ECF) transporter complex composed of an ATP-binding protein (A component, CbiO), a transmembrane protein (T component, CbiQ) and 2 possible substrate-capture proteins (S components, CbiM and CbiN) of unknown stoichimetry.

It localises to the cell inner membrane. Its pathway is cofactor biosynthesis; adenosylcobalamin biosynthesis. Functionally, part of the energy-coupling factor (ECF) transporter complex CbiMNOQ involved in cobalt import. This chain is Cobalt transport protein CbiM, found in Nostoc sp. (strain PCC 7120 / SAG 25.82 / UTEX 2576).